We begin with the raw amino-acid sequence, 132 residues long: UPF0329 protein ECU07_0050/ECU09_2020 (132 aa).

This sequence belongs to the UPF0329 family.

This is UPF0329 protein ECU07_0050/ECU09_2020 from Encephalitozoon cuniculi (strain GB-M1) (Microsporidian parasite).